The chain runs to 382 residues: MNGDKSTLSVIVAGGGTAGHIEPALAVADAIKAIDDTAVVTALGTARGLETTLVPERGYPLELIPPVPLPRKPTLDLLRLPGRVRASVRRTREVLDATGADVVVGFGGYVALPAYLAAGPGLLRRRRRIPIVVHEANASAGIANKIGARRAARVLAAVAGSGVSARGRSDAEILGIPVRASITALDRAALRAEARAHFGLPADGPVLLVFGGSQGARSLNEAVSGAAESLAAAGVAVLHAHGPKNTLDVPATPGGPPYVAVPYLSRMDLAYSAADAVICRSGAMTVAEVSAVGLPAVYVPLPHGNGEQELNARPVVAAGGGMIVADGDLSAGFVAETVIPLLRDPAQLEDMGRRAAGAGHRSAATEVARIVLDVAALTRGTR.

UDP-N-acetyl-alpha-D-glucosamine-binding positions include 17-19, N137, R179, S213, and Q308; that span reads TAG.

Belongs to the glycosyltransferase 28 family. MurG subfamily.

It localises to the cell membrane. It carries out the reaction di-trans,octa-cis-undecaprenyl diphospho-N-acetyl-alpha-D-muramoyl-L-alanyl-D-glutamyl-meso-2,6-diaminopimeloyl-D-alanyl-D-alanine + UDP-N-acetyl-alpha-D-glucosamine = di-trans,octa-cis-undecaprenyl diphospho-[N-acetyl-alpha-D-glucosaminyl-(1-&gt;4)]-N-acetyl-alpha-D-muramoyl-L-alanyl-D-glutamyl-meso-2,6-diaminopimeloyl-D-alanyl-D-alanine + UDP + H(+). It functions in the pathway cell wall biogenesis; peptidoglycan biosynthesis. Cell wall formation. Catalyzes the transfer of a GlcNAc subunit on undecaprenyl-pyrophosphoryl-MurNAc-pentapeptide (lipid intermediate I) to form undecaprenyl-pyrophosphoryl-MurNAc-(pentapeptide)GlcNAc (lipid intermediate II). The polypeptide is UDP-N-acetylglucosamine--N-acetylmuramyl-(pentapeptide) pyrophosphoryl-undecaprenol N-acetylglucosamine transferase (Rhodococcus jostii (strain RHA1)).